Here is a 154-residue protein sequence, read N- to C-terminus: Cyanate hydratase (154 aa).

Catalysis depends on residues Arg100, Glu103, and Ser126.

This sequence belongs to the cyanase family.

The catalysed reaction is cyanate + hydrogencarbonate + 3 H(+) = NH4(+) + 2 CO2. Its function is as follows. Catalyzes the reaction of cyanate with bicarbonate to produce ammonia and carbon dioxide. The sequence is that of Cyanate hydratase from Aspergillus fumigatus (strain ATCC MYA-4609 / CBS 101355 / FGSC A1100 / Af293) (Neosartorya fumigata).